Reading from the N-terminus, the 34-residue chain is Chlorotoxin-like peptide AaCtx (34 aa).

Disulfide bonds link Cys2/Cys19, Cys5/Cys27, Cys16/Cys32, and Cys20/Cys34.

It belongs to the short scorpion toxin superfamily. Chloride channel inhibitor family. In terms of tissue distribution, expressed by the venom gland.

The protein localises to the secreted. In terms of biological role, toxin with unknown function in healthy organisms. On glioma cells, interacts with chloride channels (probably ClC-3/CLCN3) and MMP2 at the surface of glioma cells. This complex is then internalized via caveolae, thus inhibiting the chloride channels necessary for cell shrinkage and tumor propagation. Inhibits migration and invasion of U87 glioma cells expressing CLCN3/ClC-3 voltage-gated chloride channels. The protein is Chlorotoxin-like peptide AaCtx of Androctonus australis (Sahara scorpion).